A 184-amino-acid chain; its full sequence is CASP-like protein 1U2 (184 aa).

Residues 1 to 16 are Cytoplasmic-facing; that stretch reads MSYGCQVSDDEPNGSK. Residues 17-37 traverse the membrane as a helical segment; the sequence is AVSLLLRLSTLALALTSAVVM. Over 38 to 62 the chain is Extracellular; the sequence is ATASECTVVQLNGVVATITYKDFPP. The helical transmembrane segment at 63–83 threads the bilayer; that stretch reads FVYLVGFNIAAAMLEAAAIYL. Topologically, residues 84–100 are cytoplasmic; it reads RLSTGGGDDDDEGFKGK. Residues 101–121 form a helical membrane-spanning segment; it reads LPGILLVVIDVAVQALVYTAT. At 122–153 the chain is on the extracellular side; the sequence is GGAFAAVSAYGPQINACGAGAGRFCGQVHQSK. The helical transmembrane segment at 154-174 threads the bilayer; that stretch reads LLSFAGSAAVGLAVVFRDVSL. Residues 175–184 are Cytoplasmic-facing; it reads PFSLWPTSSD.

It belongs to the Casparian strip membrane proteins (CASP) family. Homodimer and heterodimers.

It localises to the cell membrane. This Oryza sativa subsp. japonica (Rice) protein is CASP-like protein 1U2.